The sequence spans 156 residues: Ribosomal RNA large subunit methyltransferase H (156 aa).

Residues L73, G104, and 123–128 (LSPLTL) each bind S-adenosyl-L-methionine.

This sequence belongs to the RNA methyltransferase RlmH family. In terms of assembly, homodimer.

It localises to the cytoplasm. It carries out the reaction pseudouridine(1915) in 23S rRNA + S-adenosyl-L-methionine = N(3)-methylpseudouridine(1915) in 23S rRNA + S-adenosyl-L-homocysteine + H(+). In terms of biological role, specifically methylates the pseudouridine at position 1915 (m3Psi1915) in 23S rRNA. The sequence is that of Ribosomal RNA large subunit methyltransferase H from Photobacterium profundum (strain SS9).